Here is a 292-residue protein sequence, read N- to C-terminus: Expansin-B11 (292 aa).

An N-terminal signal peptide occupies residues 1–27 (MAKSCTLVLLLVALVGLSLLVSPIACS). N-linked (GlcNAc...) asparagine glycosylation occurs at Asn-51. The region spanning 82–192 (GGACGYQTAV…RRVPCKYSGV (111 aa)) is the Expansin-like EG45 domain. Cystine bridges form between Cys-85/Cys-114, Cys-117/Cys-187, and Cys-122/Cys-128. The region spanning 205–287 (FYFEVLIEFE…SWKPGVTYRS (83 aa)) is the Expansin-like CBD domain.

The protein belongs to the expansin family. Expansin B subfamily. In terms of tissue distribution, expressed in internodes.

Its subcellular location is the secreted. The protein localises to the cell wall. It localises to the membrane. In terms of biological role, may cause loosening and extension of plant cell walls by disrupting non-covalent bonding between cellulose microfibrils and matrix glucans. No enzymatic activity has been found. May be required for rapid internodal elongation in deepwater rice during submergence. This is Expansin-B11 (EXPB11) from Oryza sativa subsp. japonica (Rice).